The sequence spans 92 residues: Islet amyloid polypeptide (92 aa).

An N-terminal signal peptide occupies residues 1–22 (MCLLRLPVTLLVLCVALNELKA). Residues 23-34 (TSIASDTGHQVG) constitute a propeptide that is removed on maturation. An intrachain disulfide couples cysteine 38 to cysteine 43. Position 73 is a tyrosine amide (tyrosine 73). A propeptide spanning residues 77–92 (NAPQISDRELLHYLPL) is cleaved from the precursor.

It belongs to the calcitonin family. As to quaternary structure, can form homodimers. Interacts with IDE and INS. Interaction with INS inhibits homodimerization and fibril formation.

The protein localises to the secreted. Its function is as follows. Amylin/IAPP is a glucoregulatory peptide hormone that plays an important role in the regulation of energy homeostasis. Selectively inhibits insulin-stimulated glucose utilization and glycogen deposition in muscle, while not affecting adipocyte glucose metabolism. IAPP function is mediated by the CALCR-RAMPs (AMYRs) receptor complexes. Amylin can also bind CALCR receptor in the absence of RAMPs, although it is more selective for AMYRs. This Cavia porcellus (Guinea pig) protein is Islet amyloid polypeptide (IAPP).